The sequence spans 75 residues: UPF0352 protein VF_1649 (75 aa).

This sequence belongs to the UPF0352 family.

In Aliivibrio fischeri (strain ATCC 700601 / ES114) (Vibrio fischeri), this protein is UPF0352 protein VF_1649.